The primary structure comprises 790 residues: MAEQVLPQALYLSNMRKAVKIRERTPEDIFKPTNGIIHHFKTMHRYTLEMFRTCQFCPQFREIIHKALIDKNIQASLESQKKLNWCREVRKLVALKTNGDGNCLMHATSQYMWGVQDTDLVLRKALFSTLKETDTRNFKFRWQLESLKSQEFVETGLCYDTRNWNDEWDNLIKMASTDTPMARSGLQYNSLEEIHIFVLCNILRRPIIVISDKMLRSLESGSNFAPLKVGGIYLPLHWPAQECYRYPIVLGYDSHHFVPLVTLKDSGPEIRAVPLVNRDRGRFEDLKVHFLTDPENEMKEKLLKEYLMVIEIPVQGWDHGTTHLINAAKLDEANLPKEINLVDDYFELVQHEYKKWQENSEQGRSEMHAQNPMESSLPQLSLMDVKCETPNCPFFMSVNTQPLCHECSERRQKNQNKLPKLNSKPGPEGLPGMALGASRGEAYEPLAWNPEEPTGGPHSAPPTAPSPFLFSETTAMKCRSPGCPFTLNVQHNGFCERCHNARQLHASHAADHTRHLDPGKCQACLQDVTRTFNGICSTCFKRTTAEASSSLSTSLPPSCHQRSKSDPSQLVRSPSPHSCHRAGNDAPAGCLSQAARTPGDRTGTSKCRKAGCMYFGTPENKGFCTLCFIEYRENKHLVAASGKASPTASRFQNTIPCLGRECGTLGSTMFEGYCQKCFIEAQNQRFHEAKRTEEQLRSSQRRDVPRTTQSTSRPKCARASCKNILACRSEELCMECQHPNPRMGPGAHRGEPAPEDPPKQRCWAPACDHFGNAKCNGYCNECFQFKQMYG.

Residue A2 is modified to N-acetylalanine. The interval 58–300 is TRAF-binding; that stretch reads PQFREIIHKA…LTDPENEMKE (243 aa). An OTU domain is found at 92–263; sequence LVALKTNGDG…SHHFVPLVTL (172 aa). D100 is a catalytic residue. Residue C103 is the Nucleophile of the active site. Interaction with ubiquitin stretches follow at residues 157–159, 190–192, and 224–227; these read LCY, SLE, and FAPL. Residue H256 is the Proton acceptor of the active site. Residues 369–775 form an interaction with TNIP1 region; sequence AQNPMESSLP…ACDHFGNAKC (407 aa). An A20-type 1 zinc finger spans residues 381-416; that stretch reads SLMDVKCETPNCPFFMSVNTQPLCHECSERRQKNQN. The interaction with RIPK1 stretch occupies residues 386–453; it reads KCETPNCPFF…EPLAWNPEEP (68 aa). Residues C387, C392, C404, and C407 each contribute to the Zn(2+) site. Residues 415-467 form a disordered region; the sequence is QNKLPKLNSKPGPEGLPGMALGASRGEAYEPLAWNPEEPTGGPHSAPPTAPSP. Residue S459 is modified to Phosphoserine. 2 A20-type zinc fingers span residues 472 to 507 and 515 to 548; these read ETTA…LHAS and HLDP…AEAS. C478, C483, C495, C498, C521, C524, C536, and C539 together coordinate Zn(2+). The tract at residues 550–580 is disordered; sequence SLSTSLPPSCHQRSKSDPSQLVRSPSPHSCH. Polar residues predominate over residues 566–576; that stretch reads DPSQLVRSPSP. Phosphoserine is present on S575. The A20-type 4 zinc finger occupies 601–636; the sequence is RTGTSKCRKAGCMYFGTPENKGFCTLCFIEYRENKH. Residues 605–655 are required for proteasomal degradation of UBE2N and UBE2D3, TRAF6 deubiquitination, and TAX1BP1 interaction with UBE2N; the sequence is SKCRKAGCMYFGTPENKGFCTLCFIEYRENKHLVAASGKASPTASRFQNTI. A sufficient for inhibitory activity of TNF-induced NF-kappa-B activity region spans residues 606-790; sequence KCRKAGCMYF…ECFQFKQMYG (185 aa). Zn(2+)-binding residues include C607, C612, C624, and C627. S645 carries the phosphoserine modification. An A20-type 5 zinc finger spans residues 651-686; it reads FQNTIPCLGRECGTLGSTMFEGYCQKCFIEAQNQRF. Zn(2+) contacts are provided by C657, C662, C674, and C677. Over residues 689–705 the composition is skewed to basic and acidic residues; the sequence is AKRTEEQLRSSQRRDVP. A disordered region spans residues 689-712; it reads AKRTEEQLRSSQRRDVPRTTQSTS. The tract at residues 697–790 is required for lysosomal localization and for TRAF2 lysosomal degradation; it reads RSSQRRDVPR…ECFQFKQMYG (94 aa). 2 consecutive A20-type zinc fingers follow at residues 710 to 745 and 756 to 790; these read STSR…RMGP and DPPK…QMYG. C716, C721, C733, C736, C762, C767, C779, and C782 together coordinate Zn(2+).

The protein belongs to the peptidase C64 family. In terms of assembly, homodimer. Interacts with TNIP1, TAX1BP1 and TRAF2. Interacts with RNF11, ITCH and TAX1BP1 only after TNF stimulation; these interaction are transient and they are lost after 1 hour of stimulation with TNF. Interacts with YWHAZ and YWHAH. Interacts with IKBKG; the interaction is induced by TNF stimulation and by polyubiquitin. Interacts with RIPK1. Interacts with UBE2N; the interaction requires TAX1BP1. Interacts with TRAF6. In terms of processing, proteolytically cleaved by MALT1 upon TCR stimulation; disrupts NF-kappa-B inhibitory function and results in increased IL-2 production. It is proposed that only a fraction of TNFAIP3 colocalized with TCR and CBM complex is cleaved, leaving the main TNFAIP3 pool intact.

It localises to the cytoplasm. It is found in the nucleus. The protein localises to the lysosome. The enzyme catalyses Thiol-dependent hydrolysis of ester, thioester, amide, peptide and isopeptide bonds formed by the C-terminal Gly of ubiquitin (a 76-residue protein attached to proteins as an intracellular targeting signal).. Its function is as follows. Ubiquitin-editing enzyme that contains both ubiquitin ligase and deubiquitinase activities. Involved in immune and inflammatory responses signaled by cytokines, such as TNF-alpha and IL-1 beta, or pathogens via Toll-like receptors (TLRs) through terminating NF-kappa-B activity. Essential component of a ubiquitin-editing protein complex, comprising also RNF11, ITCH and TAX1BP1, that ensures the transient nature of inflammatory signaling pathways. In cooperation with TAX1BP1 promotes disassembly of E2-E3 ubiquitin protein ligase complexes in IL-1R and TNFR-1 pathways; affected are at least E3 ligases TRAF6, TRAF2 and BIRC2, and E2 ubiquitin-conjugating enzymes UBE2N and UBE2D3. In cooperation with TAX1BP1 promotes ubiquitination of UBE2N and proteasomal degradation of UBE2N and UBE2D3. Upon TNF stimulation, deubiquitinates 'Lys-63'-polyubiquitin chains on RIPK1 and catalyzes the formation of 'Lys-48'-polyubiquitin chains. This leads to RIPK1 proteasomal degradation and consequently termination of the TNF- or LPS-mediated activation of NF-kappa-B. Deubiquitinates TRAF6 probably acting on 'Lys-63'-linked polyubiquitin. Upon T-cell receptor (TCR)-mediated T-cell activation, deubiquitinates 'Lys-63'-polyubiquitin chains on MALT1 thereby mediating disassociation of the CBM (CARD11:BCL10:MALT1) and IKK complexes and preventing sustained IKK activation. Deubiquitinates NEMO/IKBKG; the function is facilitated by TNIP1 and leads to inhibition of NF-kappa-B activation. Upon stimulation by bacterial peptidoglycans, probably deubiquitinates RIPK2. Can also inhibit I-kappa-B-kinase (IKK) through a non-catalytic mechanism which involves polyubiquitin; polyubiquitin promotes association with IKBKG and prevents IKK MAP3K7-mediated phosphorylation. Targets TRAF2 for lysosomal degradation. In vitro able to deubiquitinate 'Lys-11'-, 'Lys-48'- and 'Lys-63' polyubiquitin chains. Inhibitor of programmed cell death. Has a role in the function of the lymphoid system. Required for LPS-induced production of pro-inflammatory cytokines and IFN beta in LPS-tolerized macrophages. This Macaca fascicularis (Crab-eating macaque) protein is Tumor necrosis factor alpha-induced protein 3 (TNFAIP3).